Consider the following 450-residue polypeptide: Phosphoglucosamine mutase (450 aa).

The active-site Phosphoserine intermediate is the serine 102. The Mg(2+) site is built by serine 102, aspartate 243, aspartate 245, and aspartate 247. Serine 102 is modified (phosphoserine).

It belongs to the phosphohexose mutase family. Mg(2+) serves as cofactor. Post-translationally, activated by phosphorylation.

It catalyses the reaction alpha-D-glucosamine 1-phosphate = D-glucosamine 6-phosphate. Functionally, catalyzes the conversion of glucosamine-6-phosphate to glucosamine-1-phosphate. In Rhizobium johnstonii (strain DSM 114642 / LMG 32736 / 3841) (Rhizobium leguminosarum bv. viciae), this protein is Phosphoglucosamine mutase.